Reading from the N-terminus, the 391-residue chain is MQFVDEATIDVHAGKGGDGCLSFRREKYVEFGGPDGGDGGAGGHVFVQADTNINTLVDYRYDRIFKARNGEPGKGRQMTGKSAEDIILYVPVGTTVVDLDTDEVLADLTDTDKPVMVAQAGRGGLGNIHFKSSVNQAPRKTTKGKPGESRRLRLELKVLADVGLLGMPNAGKSTLIRAISAAKPKVADYPFTTLIPNLGVVKADRYRSFVVADIPGLIEGAAEGAGLGIRFLKHLARTRLLLHVVDLAPMDGSSPANHIDAIADELDRFSPALAEQERWLVFNKIDLLADDEAQAQVDAIVDELGWQGPVFKVSAAAGVGCEDLVYALMNAIEDRRLLEREDPAYAAAQQDLRARLEEEARERVQELKAEARQARQNDDDDDHDVEVVYEP.

The region spanning 1-159 (MQFVDEATID…RRLRLELKVL (159 aa)) is the Obg domain. The region spanning 160–333 (ADVGLLGMPN…LVYALMNAIE (174 aa)) is the OBG-type G domain. GTP contacts are provided by residues 166 to 173 (GMPNAGKS), 191 to 195 (FTTLI), 213 to 216 (DIPG), 283 to 286 (NKID), and 314 to 316 (SAA). 2 residues coordinate Mg(2+): serine 173 and threonine 193. Over residues 367-377 (LKAEARQARQN) the composition is skewed to basic and acidic residues. A disordered region spans residues 367–391 (LKAEARQARQNDDDDDHDVEVVYEP). The segment covering 378–391 (DDDDDHDVEVVYEP) has biased composition (acidic residues).

The protein belongs to the TRAFAC class OBG-HflX-like GTPase superfamily. OBG GTPase family. In terms of assembly, monomer. It depends on Mg(2+) as a cofactor.

It is found in the cytoplasm. An essential GTPase which binds GTP, GDP and possibly (p)ppGpp with moderate affinity, with high nucleotide exchange rates and a fairly low GTP hydrolysis rate. Plays a role in control of the cell cycle, stress response, ribosome biogenesis and in those bacteria that undergo differentiation, in morphogenesis control. In Alcanivorax borkumensis (strain ATCC 700651 / DSM 11573 / NCIMB 13689 / SK2), this protein is GTPase Obg.